The following is a 109-amino-acid chain: RNA-binding protein Hfq (109 aa).

A Sm domain is found at 9 to 68; sequence DPFLNALRKEKVSVSVYLVNGIKLQGQVEAFDQFCIVLRNTVNQMVYKHAISTIVPAKSV. The segment at 77–109 is disordered; that stretch reads PYHQNSNDEQDENVDDIHSDDLEIQENEGNIHE.

It belongs to the Hfq family. Homohexamer.

Its function is as follows. RNA chaperone that binds small regulatory RNA (sRNAs) and mRNAs to facilitate mRNA translational regulation in response to envelope stress, environmental stress and changes in metabolite concentrations. Also binds with high specificity to tRNAs. The chain is RNA-binding protein Hfq from Francisella tularensis subsp. holarctica (strain FTNF002-00 / FTA).